The sequence spans 264 residues: tRNA (guanine-N(1)-)-methyltransferase (264 aa).

S-adenosyl-L-methionine is bound by residues glycine 113 and 133–138 (IGDYVL). The segment at 244-264 (VQQAATPGGQRRPPWHRDSRA) is disordered.

This sequence belongs to the RNA methyltransferase TrmD family. Homodimer.

It is found in the cytoplasm. The enzyme catalyses guanosine(37) in tRNA + S-adenosyl-L-methionine = N(1)-methylguanosine(37) in tRNA + S-adenosyl-L-homocysteine + H(+). Functionally, specifically methylates guanosine-37 in various tRNAs. The chain is tRNA (guanine-N(1)-)-methyltransferase from Frankia alni (strain DSM 45986 / CECT 9034 / ACN14a).